We begin with the raw amino-acid sequence, 499 residues long: Probable folate-biopterin transporter 2 (499 aa).

Transmembrane regions (helical) follow at residues 43–63, 92–112, 116–136, 141–161, 185–205, 209–229, 266–286, 302–322, 330–350, 354–374, 399–419, and 435–455; these read WSFV…GGSL, IPWI…IFGF, PYFI…SLHS, YLAL…DVTI, LSSS…VHLV, GVFG…IVFS, LYMY…FYWF, FILS…QLVL, LCLW…ILVF, LKFG…SQMI, FALL…LGGI, and WLAV…LFLV.

Belongs to the major facilitator superfamily. Folate-biopterin transporter (TC 2.A.71) family.

It localises to the membrane. In terms of biological role, could mediate folate transport. The protein is Probable folate-biopterin transporter 2 of Arabidopsis thaliana (Mouse-ear cress).